Reading from the N-terminus, the 189-residue chain is UPF0301 protein A1C_00165 (189 aa).

The protein belongs to the UPF0301 (AlgH) family.

This is UPF0301 protein A1C_00165 from Rickettsia akari (strain Hartford).